The sequence spans 84 residues: Peptide Ctry2346 (84 aa).

The signal sequence occupies residues 1 to 23 (MKTQTLLFTFSLVLLMVATQTEA). A Leucine amide modification is found at leucine 33. The propeptide occupies 37–84 (GLLDNLLGKRGLLFGKRALTNQDLFDLAYDPSLSAADMDALEMLLENY).

The protein belongs to the non-disulfide-bridged peptide (NDBP) superfamily. Short antimicrobial peptide (group 4) family. Expressed by the venom gland.

It localises to the secreted. The protein resides in the target cell membrane. Its function is as follows. Antimicrobial peptide. The polypeptide is Peptide Ctry2346 (Chaerilus tryznai (Scorpion)).